We begin with the raw amino-acid sequence, 202 residues long: MKALTTRQQEVFDLIRDHISQTGMPPTRAEIAQRLGFRSPNAAEEHLKALARKGVIEIVSGASRGIRLLQEEENGLPLIGRVAAGEPLLAQQHIEGHYQVDPGLFKPNADFLLRVSGMSMKDIGIMDGDLLAVHKTQDVRNGQVVVARIDDEVTVKRLKKQGNTVELLPENSEFKPIVVDLREHNFSIEGLAVGVIRNGEWL.

The segment at residues 28–48 (RAEIAQRLGFRSPNAAEEHLK) is a DNA-binding region (H-T-H motif). Active-site for autocatalytic cleavage activity residues include S119 and K156.

Belongs to the peptidase S24 family. In terms of assembly, homodimer.

The catalysed reaction is Hydrolysis of Ala-|-Gly bond in repressor LexA.. Represses a number of genes involved in the response to DNA damage (SOS response), including recA and lexA. Binds to the 16 bp palindromic sequence 5'-CTGTATATATATACAG-3'. In the presence of single-stranded DNA, RecA interacts with LexA causing an autocatalytic cleavage which disrupts the DNA-binding part of LexA, leading to derepression of the SOS regulon and eventually DNA repair. The chain is LexA repressor from Cronobacter sakazakii (strain ATCC BAA-894) (Enterobacter sakazakii).